The primary structure comprises 273 residues: Putative phosphoenolpyruvate synthase regulatory protein (273 aa).

153–160 is an ADP binding site; sequence AVSRAGKT.

Belongs to the pyruvate, phosphate/water dikinase regulatory protein family. PSRP subfamily.

It catalyses the reaction [pyruvate, water dikinase] + ADP = [pyruvate, water dikinase]-phosphate + AMP + H(+). The catalysed reaction is [pyruvate, water dikinase]-phosphate + phosphate + H(+) = [pyruvate, water dikinase] + diphosphate. Its function is as follows. Bifunctional serine/threonine kinase and phosphorylase involved in the regulation of the phosphoenolpyruvate synthase (PEPS) by catalyzing its phosphorylation/dephosphorylation. This Xanthomonas campestris pv. campestris (strain 8004) protein is Putative phosphoenolpyruvate synthase regulatory protein.